Consider the following 410-residue polypeptide: Platelet-activating factor acetylhydrolase IB subunit alpha (410 aa).

Residues 1–38 are required for self-association and interaction with PAFAH1B2 and PAFAH1B3; that stretch reads MVLSQRQRDELNRAIADYLRSNGYEEAYSVFKKEAELD. The segment at 1–66 is interaction with NDE1; sequence MVLSQRQRDE…SVIRLQKKVM (66 aa). Residues 1-102 form an interaction with NDEL1 region; that stretch reads MVLSQRQRDE…EWIPRPPEKY (102 aa). In terms of domain architecture, LisH spans 7–39; it reads QRDELNRAIADYLRSNGYEEAYSVFKKEAELDM. Lysine 53 bears the N6-acetyllysine mark. Positions 56–82 form a coiled coil; sequence TSVIRLQKKVMELESKLNEAKEEFTSG. The interaction with dynein and dynactin stretch occupies residues 83–410; that stretch reads GPLGQKRDPK…DQTVKVWECR (328 aa). 7 WD repeats span residues 106–147, 148–187, 190–229, 232–271, 274–333, 336–377, and 378–410; these read GHRS…RTLK, GHTD…CIRT, GHDH…CVKT, GHRE…CKAE, EHEH…CLMT, GHDN…KTLN, and AHEH…WECR. Phosphoserine is present on serine 109. An interaction with DCX region spans residues 367 to 409; the sequence is YKNKRCMKTLNAHEHFVTSLDFHKTAPYVVTGSVDQTVKVWEC. An interaction with NDEL1 region spans residues 388–410; it reads FHKTAPYVVTGSVDQTVKVWECR.

The protein belongs to the WD repeat LIS1/nudF family. Can self-associate. Component of the cytosolic PAF-AH (I) heterotetrameric enzyme, which is composed of PAFAH1B1 (beta), PAFAH1B2 (alpha2) and PAFAH1B3 (alpha1) subunits. The catalytic activity of the enzyme resides in the alpha1 (PAFAH1B3) and alpha2 (PAFAH1B2) subunits, whereas the beta subunit (PAFAH1B1) has regulatory activity. Trimer formation is not essential for the catalytic activity. Interacts with the catalytic dimer of PAF-AH (I) heterotetrameric enzyme: interacts with PAFAH1B2 homodimer (alpha2/alpha2 homodimer), PAFAH1B3 homodimer (alpha1/alpha1 homodimer) and PAFAH1B2-PAFAH1B3 heterodimer (alpha2/alpha1 heterodimer). Interacts with DCX, dynein, dynactin, IQGAP1, KATNB1, NDE1, NDEL1, NUDC and RSN. Interacts with DISC1, and this interaction is enhanced by NDEL1. Interacts with DAB1 when DAB1 is phosphorylated in response to RELN/reelin signaling. Interacts with INTS13. Interacts with DCDC1.

Its subcellular location is the cytoplasm. The protein resides in the cytoskeleton. It is found in the microtubule organizing center. It localises to the centrosome. The protein localises to the spindle. Its subcellular location is the nucleus membrane. Functionally, regulatory subunit (beta subunit) of the cytosolic type I platelet-activating factor (PAF) acetylhydrolase (PAF-AH (I)), an enzyme that catalyzes the hydrolyze of the acetyl group at the sn-2 position of PAF and its analogs and participates in PAF inactivation. Regulates the PAF-AH (I) activity in a catalytic dimer composition-dependent manner. Positively regulates the activity of the minus-end directed microtubule motor protein dynein. May enhance dynein-mediated microtubule sliding by targeting dynein to the microtubule plus end. Required for several dynein- and microtubule-dependent processes such as the maintenance of Golgi integrity, the peripheral transport of microtubule fragments and the coupling of the nucleus and centrosome. Required during brain development for the proliferation of neuronal precursors and the migration of newly formed neurons from the ventricular/subventricular zone toward the cortical plate. Neuronal migration involves a process called nucleokinesis, whereby migrating cells extend an anterior process into which the nucleus subsequently translocates. During nucleokinesis dynein at the nuclear surface may translocate the nucleus towards the centrosome by exerting force on centrosomal microtubules. Also required for proper activation of Rho GTPases and actin polymerization at the leading edge of locomoting cerebellar neurons and postmigratory hippocampal neurons in response to calcium influx triggered via NMDA receptors. May also play a role in other forms of cell locomotion including the migration of fibroblasts during wound healing. Required for dynein recruitment to microtubule plus ends and BICD2-bound cargos. May modulate the Reelin pathway through interaction of the PAF-AH (I) catalytic dimer with VLDLR. This chain is Platelet-activating factor acetylhydrolase IB subunit alpha, found in Sus scrofa (Pig).